Reading from the N-terminus, the 115-residue chain is Tyrosine-protein phosphatase 21 (115 aa).

Residues tryptophan 1–valine 115 enclose the Tyrosine-protein phosphatase domain. Aspartate 83 contacts substrate.

It belongs to the protein-tyrosine phosphatase family.

The catalysed reaction is O-phospho-L-tyrosyl-[protein] + H2O = L-tyrosyl-[protein] + phosphate. The polypeptide is Tyrosine-protein phosphatase 21 (STY-21) (Styela plicata (Wrinkled sea squirt)).